A 147-amino-acid chain; its full sequence is Hemoglobin subunit epsilon (147 aa).

Positions 3 to 147 (HFTPEEKCII…VAIALAHKYH (145 aa)) constitute a Globin domain. Ser-51 bears the Phosphoserine mark. Heme b is bound by residues His-64 and His-93.

The protein belongs to the globin family. In terms of tissue distribution, red blood cells.

Hemoglobin epsilon chain is a beta-type chain found in early embryos. In Oryctolagus cuniculus (Rabbit), this protein is Hemoglobin subunit epsilon (HBE1).